Here is a 386-residue protein sequence, read N- to C-terminus: Threonine--tRNA ligase editing subunit (386 aa).

The protein belongs to the class-II aminoacyl-tRNA synthetase family. Archaea-specific ThrRS editing domain subfamily. Probably interacts with its catalytic subunit (AC Q97VW8); a subunit fusion (in the order edit-catalytic) is fully functional.

The protein localises to the cytoplasm. In terms of biological role, freestanding tRNA editing subunit of threonine--tRNA ligase, the catalytic subunit is AC Q97VW8. Deacylates (edits) mischarged L-seryl-tRNA(Thr) in trans, removing L-serine, has no aminoacylation activity. In vitro when both subunits are present, or if the 2 subunits are fused, L-seryl-tRNA(Thr) is no longer produced. Has no activity on correctly acylated L-seryl-tRNA(Ser) or L-threonyl-tRNA(Thr). Editing is probably catalyzed by the 2'-OH of A76 of tRNA(Thr). In Saccharolobus solfataricus (strain ATCC 35092 / DSM 1617 / JCM 11322 / P2) (Sulfolobus solfataricus), this protein is Threonine--tRNA ligase editing subunit.